A 304-amino-acid polypeptide reads, in one-letter code: Protease HtpX homolog (304 aa).

2 helical membrane-spanning segments follow: residues 14 to 34 (VFIV…IGII) and 39 to 59 (YLNG…IMVM). Zn(2+) is bound at residue H144. The active site involves E145. Residue H148 coordinates Zn(2+). A run of 2 helical transmembrane segments spans residues 161–181 (IALV…IFWG) and 202–222 (LIIY…ATAI). Residue E231 coordinates Zn(2+). A disordered region spans residues 276–295 (SPLKSKKDKPGIFDSHPPIS).

This sequence belongs to the peptidase M48B family. It depends on Zn(2+) as a cofactor.

The protein resides in the cell membrane. In Listeria welshimeri serovar 6b (strain ATCC 35897 / DSM 20650 / CCUG 15529 / CIP 8149 / NCTC 11857 / SLCC 5334 / V8), this protein is Protease HtpX homolog.